Reading from the N-terminus, the 92-residue chain is DNA-directed RNA polymerase subunit Rpo11 (92 aa).

It belongs to the archaeal Rpo11/eukaryotic RPB11/RPC19 RNA polymerase subunit family. As to quaternary structure, part of the RNA polymerase complex.

It is found in the cytoplasm. The catalysed reaction is RNA(n) + a ribonucleoside 5'-triphosphate = RNA(n+1) + diphosphate. Functionally, DNA-dependent RNA polymerase (RNAP) catalyzes the transcription of DNA into RNA using the four ribonucleoside triphosphates as substrates. This chain is DNA-directed RNA polymerase subunit Rpo11, found in Methanosarcina acetivorans (strain ATCC 35395 / DSM 2834 / JCM 12185 / C2A).